Reading from the N-terminus, the 580-residue chain is MRLRWKFLFHFFGQMLIVILLLTVMLVASFFYLDARFSDAESNSGLTKATTDTLEAYLDVNEDGTWEVDNFLKKSVDKQHGWMQIIDSEGNTDYSYGVPKDVPGTYTKKELLSIYKTKKLHNYKLNYWAINIEDKSYLLLSGWKSKSEQLLTSVEKREQKIDSLAHYKSSTIDYIKRKKGAIYLLDSNGKILDSINSTKSERKTMNQLELLKYSSKPWNYKREISVKILNKDRWMVATVPNPVYVTDQEFNKSFLKVVLKAMFLVMAVLFMYIIWMTVWYMFRFGLPIFHTIRWLVNLSKGKLEEPRNREGRPVSKNKKGKIKQPYRFFGEIFESMDQLTETLRRDKRNREKIQATREEWIAGLSHDLKTPLSSIYGYSMMLESKQYDWSPEEVKEMGQVVREKSEYMSKLIEDLNLTYRLKNDALPIERKLTSLIPFFKNVIEDFKKNPFSEGYDISFVSKEEHIEFALDEAWFRRILENLLGNAVKHNGKGTEIQVILEQTKNHISLKVKDNGKGMDEETITHLFNRYYRGTNTKDSTAGTGLGLAIAKELVHLHNGTIHVNSRTNIGTVITILFKKQ.

The Cytoplasmic portion of the chain corresponds to 1–6; that stretch reads MRLRWK. Residues 7–27 form a helical membrane-spanning segment; that stretch reads FLFHFFGQMLIVILLLTVMLV. Over 28–261 the chain is Extracellular; sequence ASFFYLDARF…KSFLKVVLKA (234 aa). The helical transmembrane segment at 262–282 threads the bilayer; that stretch reads MFLVMAVLFMYIIWMTVWYMF. Residues 283–580 are Cytoplasmic-facing; that stretch reads RFGLPIFHTI…TVITILFKKQ (298 aa). The Histidine kinase domain maps to 363–580; sequence GLSHDLKTPL…TVITILFKKQ (218 aa). His366 bears the Phosphohistidine; by autocatalysis mark.

It is found in the cell membrane. It carries out the reaction ATP + protein L-histidine = ADP + protein N-phospho-L-histidine.. Functionally, member of the two-component regulatory system YvrG/YvrH that positively regulates 7 transcriptional units (wprA, wapA-yxxG, dltABCDE, sunA, sunT-bdbA-yolJ-bdbB, sigO-rsoA, and sigX-rsiX), and negatively regulates the lytABC operon. Probably activates YvrH by phosphorylation. This chain is Sensor histidine kinase YvrG (yvrG), found in Bacillus subtilis (strain 168).